Reading from the N-terminus, the 179-residue chain is Large ribosomal subunit protein uL6 (179 aa).

The protein belongs to the universal ribosomal protein uL6 family. As to quaternary structure, part of the 50S ribosomal subunit.

Its function is as follows. This protein binds to the 23S rRNA, and is important in its secondary structure. It is located near the subunit interface in the base of the L7/L12 stalk, and near the tRNA binding site of the peptidyltransferase center. The chain is Large ribosomal subunit protein uL6 from Pelobacter propionicus (strain DSM 2379 / NBRC 103807 / OttBd1).